Consider the following 49-residue polypeptide: Large ribosomal subunit protein bL33B (49 aa).

Belongs to the bacterial ribosomal protein bL33 family.

The chain is Large ribosomal subunit protein bL33B from Bacillus cereus (strain ATCC 14579 / DSM 31 / CCUG 7414 / JCM 2152 / NBRC 15305 / NCIMB 9373 / NCTC 2599 / NRRL B-3711).